A 260-amino-acid polypeptide reads, in one-letter code: Hemin import ATP-binding protein HmuV (260 aa).

Residues Leu6–Arg242 enclose the ABC transporter domain. ATP is bound at residue Gly38–Ser45.

Belongs to the ABC transporter superfamily. Heme (hemin) importer (TC 3.A.1.14.5) family. In terms of assembly, the complex is composed of two ATP-binding proteins (HmuV), two transmembrane proteins (HmuU) and a solute-binding protein (HmuT).

The protein localises to the cell inner membrane. In terms of biological role, part of the ABC transporter complex HmuTUV involved in hemin import. Responsible for energy coupling to the transport system. The sequence is that of Hemin import ATP-binding protein HmuV from Vibrio parahaemolyticus serotype O3:K6 (strain RIMD 2210633).